The chain runs to 1064 residues: Serine protease inhibitor Kazal-type 5 (1064 aa).

Residues 1-22 (MKIATVSVLLPLALCLIQDAAS) form the signal peptide. Positions 28–66 (EMCHEFQAFMKNGKLFCPQDKKFFQSLDGIMFINKCATC) constitute a Kazal-like 1; atypical domain. 21 disulfides stabilise this stretch: cysteine 30-cysteine 66, cysteine 44-cysteine 63, cysteine 97-cysteine 133, cysteine 111-cysteine 130, cysteine 119-cysteine 151, cysteine 161-cysteine 197, cysteine 175-cysteine 194, cysteine 225-cysteine 261, cysteine 239-cysteine 258, cysteine 297-cysteine 333, cysteine 311-cysteine 330, cysteine 367-cysteine 403, cysteine 381-cysteine 400, cysteine 437-cysteine 473, cysteine 451-cysteine 470, cysteine 496-cysteine 532, cysteine 510-cysteine 529, cysteine 567-cysteine 603, cysteine 581-cysteine 600, cysteine 632-cysteine 668, and cysteine 646-cysteine 665. Kazal-like domains are found at residues 91-153 (APTE…ECKS), 155-216 (NPEQ…ETRI), 219-285 (NAEK…KAEE), 291-352 (REIV…ARAR), 361-423 (TSYA…KSRN), 431-489 (ASFE…KAKR), 490-551 (EAAK…EEKG), 561-622 (EAVQ…PRAK), 626-688 (EAEK…EDQR), 701-757 (GNTQ…KNEY), 768-830 (ESGK…EDRS), 843-905 (NDKE…EKSS), 910-971 (NNAK…EKPS), and 987-1048 (SLDS…KCEE). Basic and acidic residues predominate over residues 676–688 (NEERKRKEEEDQR). The segment at 676-705 (NEERKRKEEEDQRNAAGHGSSGGGGGNTQD) is disordered. 6 disulfide bridges follow: cysteine 707–cysteine 743, cysteine 721–cysteine 740, cysteine 774–cysteine 810, cysteine 788–cysteine 807, cysteine 849–cysteine 885, and cysteine 863–cysteine 882. The segment at 751–775 (AERKNEYSRSRSNGTGSESGKDTCD) is disordered. The interval 818-849 (AAEKKKKEDEDRSNTGERSNTGERSNDKEDLC) is disordered. The span at 895 to 905 (ERKKKDEEKSS) shows a compositional bias: basic and acidic residues. A disordered region spans residues 895–915 (ERKKKDEEKSSSKPSNNAKDE). 2 disulfide bridges follow: cysteine 916–cysteine 952 and cysteine 930–cysteine 949. Residues 967–977 (QEKPSHVRASQ) show a composition bias toward basic and acidic residues. The segment at 967 to 987 (QEKPSHVRASQEEDSPDSFSS) is disordered. Disulfide bonds link cysteine 993-cysteine 1028, cysteine 1006-cysteine 1025, and cysteine 1014-cysteine 1046. Positions 1041–1064 (RSTGKCEESSTPGTTAASMPPSDE) are disordered.

In terms of processing, proteolytically processed by furin in individual domains (D1, D5, D6, D8 through D11, and D9 through D15) exhibiting various inhibitory potentials for multiple proteases. As to expression, highly expressed in the thymus and stratum corneum. Also found in the oral mucosa, parathyroid gland, Bartholin's glands, tonsils, and vaginal epithelium. Very low levels are detected in lung, kidney, and prostate.

The protein localises to the secreted. Serine protease inhibitor, probably important for the anti-inflammatory and/or antimicrobial protection of mucous epithelia. Contribute to the integrity and protective barrier function of the skin by regulating the activity of defense-activating and desquamation-involved proteases. Inhibits KLK5, it's major target, in a pH-dependent manner. Inhibits KLK7, KLK14 CASP14, and trypsin. This Homo sapiens (Human) protein is Serine protease inhibitor Kazal-type 5 (SPINK5).